A 286-amino-acid polypeptide reads, in one-letter code: 3-hydroxyanthranilate 3,4-dioxygenase (286 aa).

The interval 1–160 (MERRLGVRAW…SEQYRTGKPI (160 aa)) is domain A (catalytic). Arg-43 is a binding site for O2. Fe cation contacts are provided by His-47, Glu-53, and His-91. Glu-53 contacts substrate. Residues Arg-95 and Glu-105 each contribute to the substrate site. The interval 161-177 (PDQLLKEPPFPLSTRSI) is linker. The domain B stretch occupies residues 178–286 (MEPMSLDAWL…QDPACKKPLG (109 aa)).

This sequence belongs to the 3-HAO family. Monomer. It depends on Fe(2+) as a cofactor.

It is found in the cytoplasm. The protein resides in the cytosol. The enzyme catalyses 3-hydroxyanthranilate + O2 = (2Z,4Z)-2-amino-3-carboxymuconate 6-semialdehyde. Its pathway is cofactor biosynthesis; NAD(+) biosynthesis; quinolinate from L-kynurenine: step 3/3. Its function is as follows. Catalyzes the oxidative ring opening of 3-hydroxyanthranilate to 2-amino-3-carboxymuconate semialdehyde, which spontaneously cyclizes to quinolinate. The polypeptide is 3-hydroxyanthranilate 3,4-dioxygenase (Homo sapiens (Human)).